Here is a 361-residue protein sequence, read N- to C-terminus: Polygalacturonase (361 aa).

Positions 1 to 18 (MISANSLLISTLCAFAIA) are cleaved as a signal peptide. An intrachain disulfide couples C27 to C43. PbH1 repeat units lie at residues 155-185 (CSDL…DVGS), 186-207 (SSNV…AVNS), 208-228 (GSTI…SVGS), 237-258 (VNGF…RIKT), and 266-288 (VTNV…VIEG). D200 functions as the Proton donor in the catalytic mechanism. A disulfide bridge links C202 with C218. H222 is a catalytic residue. N-linked (GlcNAc...) asparagine glycans are attached at residues N318 and N330. The cysteines at positions 350 and 361 are disulfide-linked.

The protein belongs to the glycosyl hydrolase 28 family.

It carries out the reaction (1,4-alpha-D-galacturonosyl)n+m + H2O = (1,4-alpha-D-galacturonosyl)n + (1,4-alpha-D-galacturonosyl)m.. The sequence is that of Polygalacturonase (PGU1) from Saccharomyces cerevisiae (strain ATCC 204508 / S288c) (Baker's yeast).